The primary structure comprises 485 residues: Glucose-6-phosphate 1-dehydrogenase (485 aa).

Residues Arg46, 89–90 (DI), and Lys144 contribute to the NADP(+) site. His174, Lys178, Glu212, and Asp231 together coordinate substrate. His236 functions as the Proton acceptor in the catalytic mechanism. Residue Lys334 coordinates substrate.

It belongs to the glucose-6-phosphate dehydrogenase family.

It carries out the reaction D-glucose 6-phosphate + NADP(+) = 6-phospho-D-glucono-1,5-lactone + NADPH + H(+). The protein operates within carbohydrate degradation; pentose phosphate pathway; D-ribulose 5-phosphate from D-glucose 6-phosphate (oxidative stage): step 1/3. Catalyzes the oxidation of glucose 6-phosphate to 6-phosphogluconolactone. The sequence is that of Glucose-6-phosphate 1-dehydrogenase from Zymomonas mobilis subsp. mobilis (strain ATCC 31821 / ZM4 / CP4).